The primary structure comprises 64 residues: Prokaryotic ubiquitin-like protein Pup (64 aa).

The interval 1 to 32 (MNAKQTQIMGGGGRDEDNAEDSAQASGQVQIN) is disordered. Residues 20-58 (EDSAQASGQVQINTEGVDSLLDEIDGLLENNAEEFVRSY) are ARC ATPase binding. Over residues 21–32 (DSAQASGQVQIN) the composition is skewed to polar residues. E64 is covalently cross-linked (Isoglutamyl lysine isopeptide (Glu-Lys) (interchain with K-? in acceptor proteins)).

This sequence belongs to the prokaryotic ubiquitin-like protein family. Strongly interacts with the proteasome-associated ATPase ARC through a hydrophobic interface; the interacting region of Pup lies in its C-terminal half. There is one Pup binding site per ARC hexamer ring.

Its pathway is protein degradation; proteasomal Pup-dependent pathway. Functionally, protein modifier that is covalently attached to lysine residues of substrate proteins, thereby targeting them for proteasomal degradation. The tagging system is termed pupylation. In Corynebacterium glutamicum (strain R), this protein is Prokaryotic ubiquitin-like protein Pup.